The chain runs to 212 residues: Octanoyltransferase (212 aa).

The BPL/LPL catalytic domain maps to 31–209; it reads AETQDEIWLV…HFADLLGYNI (179 aa). Residues 70 to 77, 138 to 140, and 151 to 153 contribute to the substrate site; these read RGGQITYH, SLG, and GLA. Residue Cys169 is the Acyl-thioester intermediate of the active site.

This sequence belongs to the LipB family.

Its subcellular location is the cytoplasm. The catalysed reaction is octanoyl-[ACP] + L-lysyl-[protein] = N(6)-octanoyl-L-lysyl-[protein] + holo-[ACP] + H(+). It participates in protein modification; protein lipoylation via endogenous pathway; protein N(6)-(lipoyl)lysine from octanoyl-[acyl-carrier-protein]: step 1/2. Its function is as follows. Catalyzes the transfer of endogenously produced octanoic acid from octanoyl-acyl-carrier-protein onto the lipoyl domains of lipoate-dependent enzymes. Lipoyl-ACP can also act as a substrate although octanoyl-ACP is likely to be the physiological substrate. This Haemophilus influenzae (strain PittEE) protein is Octanoyltransferase.